The primary structure comprises 776 residues: Glucocorticoid receptor (776 aa).

Disordered regions lie at residues 1–25, 47–86, and 394–415; these read MDPK…YNDK, SCPT…PQPD, and SSPG…STGP. A modulating region spans residues 1-419; sequence MDPKDLLKPS…STSTGPPPKL (419 aa). Residues 47–83 are compositionally biased toward polar residues; sequence SCPTSTASQSNTRQQQHFQKQLTATGDSTNGLNNNVP. Residues 403–413 are compositionally biased toward low complexity; it reads SPSPSTSSTST. 2 consecutive NR C4-type zinc fingers follow at residues 420 to 440 and 456 to 480; these read CLVC…CGSC and CAGR…YRKC. Positions 420–485 form a DNA-binding region, nuclear receptor; that stretch reads CLVCSDEASG…RYRKCLQAGM (66 aa). The tract at residues 486 to 522 is hinge; the sequence is NLEARKTKKKIKGIQQSTTATARESPETSMTRTLVPA. Residues 523 to 757 enclose the NR LBD domain; sequence SVAQLTPTLI…FPDMLSEIIS (235 aa).

This sequence belongs to the nuclear hormone receptor family. NR3 subfamily. In terms of assembly, heteromultimeric cytoplasmic complex with HSP90. Upon ligand binding the complex undergoes a conformation change and moves to the nucleus, where it dissociates. Binds to DNA as a homodimer, and as heterodimer with NR3C2. Interaction with numerous other transcription factors modulates transcription activation. In terms of tissue distribution, expressed in liver with relative abundance.

Its subcellular location is the cytoplasm. It is found in the nucleus. The protein localises to the mitochondrion. The protein resides in the cytoskeleton. It localises to the spindle. Its subcellular location is the microtubule organizing center. It is found in the centrosome. In terms of biological role, receptor for glucocorticoids (GC). Has a dual mode of action: as a transcription factor that binds to glucocorticoid response elements (GRE), both for nuclear and mitochondrial DNA, and as a modulator of other transcription factors. Affects inflammatory responses, cellular proliferation and differentiation in target tissues. Involved in chromatin remodeling. Plays a role in rapid mRNA degradation by binding to the 5' UTR of target mRNAs and interacting with PNRC2 in a ligand-dependent manner which recruits the RNA helicase UPF1 and the mRNA-decapping enzyme DCP1A, leading to RNA decay. Could act as a coactivator for STAT5-dependent transcription upon growth hormone (GH) stimulation and could reveal an essential role of hepatic GR in the control of body growth. Mediates glucocorticoid-induced apoptosis. Promotes accurate chromosome segregation during mitosis. May act as a tumor suppressor. May play a negative role in adipogenesis through the regulation of lipolytic and antilipogenic gene expression. In Xenopus laevis (African clawed frog), this protein is Glucocorticoid receptor (nr3c1).